Here is a 377-residue protein sequence, read N- to C-terminus: Caspase-4 (377 aa).

Residues M1 to D59 form a required for LPS-binding region. The propeptide occupies M1–D80. One can recognise a CARD domain in the interval M1–E91. S83 is subject to Phosphoserine. Residues H210 and C258 contribute to the active site. Positions S271–D289 are excised as a propeptide.

It belongs to the peptidase C14A family. In terms of assembly, heterotetramer that consists of two anti-parallel arranged heterodimers, each one formed by a 20 kDa (Caspase-4 subunit p20) and a 10 kDa (Caspase-4 subunit p10) subunit. Upon direct LPS-binding, forms large homooligomers, resulting in its activation. These oligomers are often referred to as 'non-canonical inflammasomes'. In its precursor form, interacts with TMEM214; this interaction is required for association with the endoplasmic reticulum membrane. Interacts with CASP1. Interacts with NOD2. Interacts with Serpinb1a, Serpinb1b and Serpinb1c; these interactions regulate CASP4 activity. As to quaternary structure, heterotetramer that consists of two anti-parallel arranged heterodimers, each one formed by a 20 kDa (Caspase-4 subunit p20) and a 10 kDa (Caspase-4 subunit p10) subunit. Post-translationally, in response to activation signals, undergoes autoproteolytic cleavage and activation.

The protein resides in the cytoplasm. It is found in the cytosol. It localises to the endoplasmic reticulum membrane. The protein localises to the mitochondrion. Its subcellular location is the inflammasome. The protein resides in the secreted. The enzyme catalyses Strict requirement for Asp at the P1 position. It has a preferred cleavage sequence of Tyr-Val-Ala-Asp-|- but also cleaves at Asp-Glu-Val-Asp-|-.. With respect to regulation, activated by homooligomerization induced by direct binding to cytosolic LPS, in a TLR4-independent manner. In addition to LPS, CASP4/CASP11 may also be activated by oxidized phospholipid 1-palmitoyl-2-arachidonoyl- sn-glycero-3-phosphorylcholine, an oxidized phospholipid (oxPAPC), in dendritic cells, promoting adaptive immunity. The role of oxPAPC is however unclear and another report suggests that oxPAPC competes with LPS-binding and inhibits the non-canonical inflammasome in macrophages. Its function is as follows. Inflammatory caspase that acts as the effector of the non-canonical inflammasome by mediating lipopolysaccharide (LPS)-induced pyroptosis. Also indirectly activates the NLRP3 and NLRP6 inflammasomes. Acts as a thiol protease that cleaves a tetrapeptide after an Asp residue at position P1: catalyzes cleavage of CGAS, GSDMD and IL18. Effector of the non-canonical inflammasome independently of NLRP3 inflammasome and CASP1: the non-canonical inflammasome promotes pyroptosis through GSDMD cleavage without involving secretion of cytokine IL1B. In the non-canonical inflammasome, CASP4 is activated by direct binding to the lipid A moiety of LPS without the need of an upstream sensor. LPS-binding promotes CASP4 activation and CASP4-mediated cleavage of GSDMD and IL18, followed by IL18 secretion through the GSDMD pore, pyroptosis of infected cells and their extrusion into the gut lumen. Also indirectly promotes secretion of mature cytokines (IL1A and HMGB1) downstream of GSDMD-mediated pyroptosis via activation of the NLRP3 and NLRP6 inflammasomes. Involved in NLRP3-dependent CASP1 activation and IL1B secretion in response to non-canonical activators, such as UVB radiation or cholera enterotoxin. Involved in NLRP6 inflammasome-dependent activation in response to lipoteichoic acid (LTA), a cell-wall component of Gram-positive bacteria, which leads to CASP1 activation and IL1B secretion. Involved in LPS-induced IL6 secretion; this activity may not require caspase enzymatic activity. The non-canonical inflammasome is required for innate immunity to cytosolic, but not vacuolar, bacteria. Plays a crucial role in the restriction of S.typhimurium replication in colonic epithelial cells during infection. Pyroptosis limits bacterial replication, while cytokine secretion promotes the recruitment and activation of immune cells and triggers mucosal inflammation. May also act as an activator of adaptive immunity in dendritic cells, following activation by oxidized phospholipid 1-palmitoyl-2-arachidonoyl- sn-glycero-3-phosphorylcholine, an oxidized phospholipid (oxPAPC). Cleavage of GSDMD is not strictly dependent on the consensus cleavage site but depends on an exosite interface on CASP4 that recognizes and binds the Gasdermin-D, C-terminal (GSDMD-CT) part. Catalyzes cleavage and maturation of IL18; IL18 processing also depends of the exosite interface on CASP4. In contrast, it does not directly process IL1B. During non-canonical inflammasome activation, cuts CGAS and may play a role in the regulation of antiviral innate immune activation. The protein is Caspase-4 (CASP4) of Bos taurus (Bovine).